A 288-amino-acid polypeptide reads, in one-letter code: MKTVSQISELRAQVKAWRQQGLTVAFVPTMGNLHAGHISLVAEAHKHADKVVASIFVNPMQFGVNEDIENYPRTMINDEQKLTAAGTDLLFTPSPDIIYPKGLAKQSFVEVPNISDGYCGESRPGHFRGVATIVCKLFNLVQPDVACFGLKDYQQVQVIQRMVEDLSMPITIIPVATIREESGLALSSRNGYLTEEEKAIAPALHQSLHWLGEQIRAGYAQQDSIDFIGLAKHAAKTINDAGLHTDYLHVCHAETLQPASEDDTQLVILAAAHCGKARLIDNLQVNLA.

ATP is bound at residue 30–37 (MGNLHAGH). His37 acts as the Proton donor in catalysis. Position 61 (Gln61) interacts with (R)-pantoate. Gln61 is a binding site for beta-alanine. 149–152 (GLKD) lines the ATP pocket. Residue Gln155 coordinates (R)-pantoate. Residues Ile178 and 186–189 (LSSR) contribute to the ATP site.

Belongs to the pantothenate synthetase family. As to quaternary structure, homodimer.

It localises to the cytoplasm. It catalyses the reaction (R)-pantoate + beta-alanine + ATP = (R)-pantothenate + AMP + diphosphate + H(+). It participates in cofactor biosynthesis; (R)-pantothenate biosynthesis; (R)-pantothenate from (R)-pantoate and beta-alanine: step 1/1. Its function is as follows. Catalyzes the condensation of pantoate with beta-alanine in an ATP-dependent reaction via a pantoyl-adenylate intermediate. This is Pantothenate synthetase from Colwellia psychrerythraea (strain 34H / ATCC BAA-681) (Vibrio psychroerythus).